A 545-amino-acid polypeptide reads, in one-letter code: Acetyltransferase BOT5 (545 aa).

Residues 1–19 (MATIPLFFSLILFLRLYHA) form the signal peptide. N-linked (GlcNAc...) asparagine glycosylation is found at asparagine 70 and asparagine 198. Histidine 208 functions as the Proton acceptor in the catalytic mechanism. Residues asparagine 346 and asparagine 445 are each glycosylated (N-linked (GlcNAc...) asparagine). Residues 466-493 (GAGNQKSSSTRKAARHTEPTQAQTQPGR) form a disordered region.

It belongs to the plant acyltransferase family.

The protein operates within secondary metabolite biosynthesis. Functionally, acetyltransferase; part of the gene cluster that mediates the biosynthesis of botrydial. Botrydial is necessary for colonization of plant tissue by the T4 strain. It is a strain-dependent virulence factor since highly aggressive strains like SAS56 or B05 still retain substantial virulence when botrydial synthesis is impaired, since they produce also botcinic acid. The first step of botrydial biosynthesis is performed by the sesquiterpene synthase BOT2 which catalyzes the cyclization of farnesyl diphosphate (FPP) to presilphiperfolan-8-beta-ol (PSP). The cytochrome P450 monooxygenase BOT4 then catalyzes the hydroxylation at C-4 to give a probotryane intermediate. Acetylation of the hydroxyl at C-4 is carried out by the acetyltransferase BOT5, followed by the combined action of the P450 monooxygenases BOT3 and BOT1, to yield finally the glycol, via the regio- and stereospecific hydroxylations at C-10 and C-15 of the probotryane intermediates, respectively. The cleavage of the C10-C15 bond of probotryane skeleton is an intriguing and chemically important reaction, which could be mediated by some of the monooxygenases or by a combination of them. It is possible that either BOT3 or BOT1 would oxidize either the 10- or the 15-hydroxy group to the hydroperoxide derivative, which would then undergo heterolytic fragmentation to give the dialdehyde botrydial. Finally, the dehydrogenase BOT7 might be involved in the conversion of botrydial to dihydrobotrydial. In Botryotinia fuckeliana (Noble rot fungus), this protein is Acetyltransferase BOT5.